The following is a 304-amino-acid chain: Acetyl-coenzyme A carboxylase carboxyl transferase subunit beta (304 aa).

The 270-residue stretch at 23-292 folds into the CoA carboxyltransferase N-terminal domain; the sequence is VWTKCDSCGQ…PNPEAPREGV (270 aa). Zn(2+)-binding residues include Cys-27, Cys-30, Cys-46, and Cys-49. A C4-type zinc finger spans residues 27–49; that stretch reads CDSCGQVLYRAELERNLEVCPKC. The segment at 284-304 is disordered; the sequence is NPEAPREGVVVPPVPDQEPEA. The segment covering 295 to 304 has biased composition (pro residues); it reads PPVPDQEPEA.

Belongs to the AccD/PCCB family. Acetyl-CoA carboxylase is a heterohexamer composed of biotin carboxyl carrier protein (AccB), biotin carboxylase (AccC) and two subunits each of ACCase subunit alpha (AccA) and ACCase subunit beta (AccD). It depends on Zn(2+) as a cofactor.

The protein resides in the cytoplasm. It carries out the reaction N(6)-carboxybiotinyl-L-lysyl-[protein] + acetyl-CoA = N(6)-biotinyl-L-lysyl-[protein] + malonyl-CoA. It participates in lipid metabolism; malonyl-CoA biosynthesis; malonyl-CoA from acetyl-CoA: step 1/1. Its function is as follows. Component of the acetyl coenzyme A carboxylase (ACC) complex. Biotin carboxylase (BC) catalyzes the carboxylation of biotin on its carrier protein (BCCP) and then the CO(2) group is transferred by the transcarboxylase to acetyl-CoA to form malonyl-CoA. The chain is Acetyl-coenzyme A carboxylase carboxyl transferase subunit beta from Escherichia coli O139:H28 (strain E24377A / ETEC).